A 501-amino-acid polypeptide reads, in one-letter code: Cytochrome P450 81F4 (501 aa).

Residue K245 forms a Glycyl lysine isopeptide (Lys-Gly) (interchain with G-Cter in ubiquitin) linkage. Residues 285-305 (IIIKGLMLGIMVASSETSALT) form a helical membrane-spanning segment. C435 is a heme binding site.

This sequence belongs to the cytochrome P450 family. Heme is required as a cofactor.

Its subcellular location is the membrane. The protein operates within secondary metabolite biosynthesis. In terms of biological role, involved in indole glucosinolate biosynthesis. Catalyzes hydroxylation reactions of the glucosinolate indole ring. Converts indol-3-yl-methylglucosinolate (I3M) to 1-hydroxy-indol-3-yl-methylglucosinolate (1OH-I3M) intermediate. This hydroxy intermediates is converted to 1-methoxy-indol-3-yl-methylglucosinolate (1MO-I3M) by indole glucosinolate methyltransferase 1 and 2 (IGMT1 and IGMT2). The chain is Cytochrome P450 81F4 from Arabidopsis thaliana (Mouse-ear cress).